Reading from the N-terminus, the 439-residue chain is Dihydroorotase (439 aa).

Zn(2+) contacts are provided by histidine 65 and histidine 67. Substrate contacts are provided by residues 67 to 69 and asparagine 99; that span reads HFR. Residues aspartate 156, histidine 183, histidine 246, and aspartate 321 each contribute to the Zn(2+) site. Residue aspartate 321 is part of the active site. Substrate contacts are provided by residues histidine 325 and 339–340; that span reads FG.

The protein belongs to the metallo-dependent hydrolases superfamily. DHOase family. Class I DHOase subfamily. It depends on Zn(2+) as a cofactor.

It carries out the reaction (S)-dihydroorotate + H2O = N-carbamoyl-L-aspartate + H(+). The protein operates within pyrimidine metabolism; UMP biosynthesis via de novo pathway; (S)-dihydroorotate from bicarbonate: step 3/3. Its function is as follows. Catalyzes the reversible cyclization of carbamoyl aspartate to dihydroorotate. The polypeptide is Dihydroorotase (Chlorobaculum tepidum (strain ATCC 49652 / DSM 12025 / NBRC 103806 / TLS) (Chlorobium tepidum)).